A 145-amino-acid chain; its full sequence is MLTAEEKAAVTGFWGKVNVDVVGAEALGRLLVVYPWTQRFFEHFGDLSSAGAVMGNPKVKAHGKRVLDAFSEGLKHLDDLKGAFAELSELHCNKLHVDPENFRLLGNVLVVVLARNFGGEFTPLVQADFQKVVAGVANALAHRYH.

Residues 1-145 (MLTAEEKAAV…VANALAHRYH (145 aa)) enclose the Globin domain. A Phosphothreonine modification is found at Thr11. Lys58 is modified (N6-acetyllysine). A heme b-binding site is contributed by His62. Position 81 is an N6-acetyllysine (Lys81). His91 is a binding site for heme b. Residue Cys92 is modified to S-nitrosocysteine.

The protein belongs to the globin family. As to quaternary structure, heterotetramer of two alpha chains and two beta chains. Red blood cells.

In terms of biological role, involved in oxygen transport from the lung to the various peripheral tissues. The protein is Hemoglobin subunit beta-3 (HBB) of Odocoileus virginianus virginianus (Virginia white-tailed deer).